We begin with the raw amino-acid sequence, 133 residues long: Small ribosomal subunit protein uS12c (133 aa).

The protein belongs to the universal ribosomal protein uS12 family. As to quaternary structure, part of the 30S ribosomal subunit.

It localises to the plastid. The protein localises to the chloroplast. With S4 and S5 plays an important role in translational accuracy. Located at the interface of the 30S and 50S subunits. In Chlamydomonas reinhardtii (Chlamydomonas smithii), this protein is Small ribosomal subunit protein uS12c (rps12).